The primary structure comprises 1058 residues: Gem-associated protein 4 (1058 aa).

Residue methionine 1 is modified to N-acetylmethionine. Threonine 84 carries the phosphothreonine modification. Residues serine 86 and serine 205 each carry the phosphoserine modification. Residues 714-735 (LPKEKRCLSLDRKDLAIHILEL) are leucine-zipper.

As to quaternary structure, part of the core SMN complex that contains SMN1, GEMIN2/SIP1, DDX20/GEMIN3, GEMIN4, GEMIN5, GEMIN6, GEMIN7, GEMIN8 and STRAP/UNRIP. Part of the SMN-Sm complex that contains SMN1, GEMIN2/SIP1, DDX20/GEMIN3, GEMIN4, GEMIN5, GEMIN6, GEMIN7, GEMIN8, STRAP/UNRIP and the Sm proteins SNRPB, SNRPD1, SNRPD2, SNRPD3, SNRPE, SNRPF and SNRPG. Interacts with GEMIN3; the interaction is direct. Interacts with GEMIN5. Interacts with GEMIN8; the interaction is direct. Interacts with several snRNP SM core proteins, including SNRPB, SNRPD1, SNRPD2, SNRPD3 and SNRPE. Interacts with PPP4R2.

Its subcellular location is the cytoplasm. It localises to the nucleus. It is found in the nucleolus. The protein resides in the gem. The SMN complex catalyzes the assembly of small nuclear ribonucleoproteins (snRNPs), the building blocks of the spliceosome, and thereby plays an important role in the splicing of cellular pre-mRNAs. Most spliceosomal snRNPs contain a common set of Sm proteins SNRPB, SNRPD1, SNRPD2, SNRPD3, SNRPE, SNRPF and SNRPG that assemble in a heptameric protein ring on the Sm site of the small nuclear RNA to form the core snRNP (Sm core). In the cytosol, the Sm proteins SNRPD1, SNRPD2, SNRPE, SNRPF and SNRPG are trapped in an inactive 6S pICln-Sm complex by the chaperone CLNS1A that controls the assembly of the core snRNP. To assemble core snRNPs, the SMN complex accepts the trapped 5Sm proteins from CLNS1A forming an intermediate. Binding of snRNA inside 5Sm triggers eviction of the SMN complex, thereby allowing binding of SNRPD3 and SNRPB to complete assembly of the core snRNP. The chain is Gem-associated protein 4 (GEMIN4) from Homo sapiens (Human).